Here is a 288-residue protein sequence, read N- to C-terminus: MAGAKEIRTKIASVKNTQKITKAMEMVATSKMRKTQERMAASRPYSETIRKVISHIAKGSIGYKHPFLTERDIKKVGYLVVSTDRGLCGGLNINLFKATLNEFKTWKDKDVSVELGLVGSKGVSFYQNLGLNVRSQVTGLGDNPEMERIVGAVNEMINAFRNGEVDAVYVAYNRFENTMTQKPVIAQLLPLPKLDDDELDTKGSWDYIYEPNPQVLLDSLLVRYLETQVYQAVVDNLASEQAARMVAMKAATDNAGTLIDELQLVYNKARQASITNELNEIVAGAAAI.

It belongs to the ATPase gamma chain family. In terms of assembly, F-type ATPases have 2 components, CF(1) - the catalytic core - and CF(0) - the membrane proton channel. CF(1) has five subunits: alpha(3), beta(3), gamma(1), delta(1), epsilon(1). CF(0) has three main subunits: a, b and c.

It is found in the cell inner membrane. Functionally, produces ATP from ADP in the presence of a proton gradient across the membrane. The gamma chain is believed to be important in regulating ATPase activity and the flow of protons through the CF(0) complex. The sequence is that of ATP synthase gamma chain from Actinobacillus pleuropneumoniae serotype 3 (strain JL03).